A 365-amino-acid polypeptide reads, in one-letter code: Aminomethyltransferase (365 aa).

This sequence belongs to the GcvT family. As to quaternary structure, the glycine cleavage system is composed of four proteins: P, T, L and H.

The catalysed reaction is N(6)-[(R)-S(8)-aminomethyldihydrolipoyl]-L-lysyl-[protein] + (6S)-5,6,7,8-tetrahydrofolate = N(6)-[(R)-dihydrolipoyl]-L-lysyl-[protein] + (6R)-5,10-methylene-5,6,7,8-tetrahydrofolate + NH4(+). The glycine cleavage system catalyzes the degradation of glycine. The polypeptide is Aminomethyltransferase (Parafrankia sp. (strain EAN1pec)).